The following is a 335-amino-acid chain: Methionine import ATP-binding protein MetN 2 (335 aa).

An ABC transporter domain is found at 2 to 242 (IEFQNVHKTY…PEHPTTKRFV (241 aa)). ATP is bound at residue 38 to 45 (GHSGAGKS).

This sequence belongs to the ABC transporter superfamily. Methionine importer (TC 3.A.1.24) family. The complex is composed of two ATP-binding proteins (MetN), two transmembrane proteins (MetI) and a solute-binding protein (MetQ).

The protein localises to the cell inner membrane. The enzyme catalyses L-methionine(out) + ATP + H2O = L-methionine(in) + ADP + phosphate + H(+). The catalysed reaction is D-methionine(out) + ATP + H2O = D-methionine(in) + ADP + phosphate + H(+). Part of the ABC transporter complex MetNIQ involved in methionine import. Responsible for energy coupling to the transport system. This is Methionine import ATP-binding protein MetN 2 from Pseudomonas entomophila (strain L48).